The primary structure comprises 318 residues: Probable aminopeptidase YbaC (318 aa).

The active-site Nucleophile is Ser-115. Asp-266 is an active-site residue. Residue His-296 is the Proton donor of the active site.

Belongs to the peptidase S33 family.

In terms of biological role, probable aminopeptidase. This is Probable aminopeptidase YbaC (ybaC) from Bacillus subtilis (strain 168).